We begin with the raw amino-acid sequence, 110 residues long: DNA-directed RNA polymerase subunit omega (110 aa).

Belongs to the RNA polymerase subunit omega family. In terms of assembly, the RNAP catalytic core consists of 2 alpha, 1 beta, 1 beta' and 1 omega subunit. When a sigma factor is associated with the core the holoenzyme is formed, which can initiate transcription.

The catalysed reaction is RNA(n) + a ribonucleoside 5'-triphosphate = RNA(n+1) + diphosphate. In terms of biological role, promotes RNA polymerase assembly. Latches the N- and C-terminal regions of the beta' subunit thereby facilitating its interaction with the beta and alpha subunits. This is DNA-directed RNA polymerase subunit omega from Vesicomyosocius okutanii subsp. Calyptogena okutanii (strain HA).